The sequence spans 206 residues: Uridine kinase (206 aa).

Residue 9-16 coordinates ATP; it reads GGSGSGKT.

This sequence belongs to the uridine kinase family.

It is found in the cytoplasm. The enzyme catalyses uridine + ATP = UMP + ADP + H(+). It catalyses the reaction cytidine + ATP = CMP + ADP + H(+). Its pathway is pyrimidine metabolism; CTP biosynthesis via salvage pathway; CTP from cytidine: step 1/3. It functions in the pathway pyrimidine metabolism; UMP biosynthesis via salvage pathway; UMP from uridine: step 1/1. This chain is Uridine kinase, found in Borrelia hermsii (strain HS1 / DAH).